We begin with the raw amino-acid sequence, 429 residues long: MASVVVVGSQWGDEGKGKITDFLSQEADVVSRYQGGDNAGHTIVFNGQTFKLRLIPSGIFFHDKLAVIGNGVVLNPKSLVEELQYLRDKGVNPDNLRISNRAHVILPYHITLDGAQEKAKAGGKIGTTNKGIGPAYMDKAERIGIRVADLLDKDTFAALLKRNLAEKNQIITKLYDLEPLKFEDIFDDYYAYGQTLKPFVTDTSVVINDALDNGQRVLFEGAQGVMLDIDQGTYPYVTSSNPVAGGVTIGSGVGPSKIDNCVGVLKAYTSRVGDGPFPTELFDEVGDFIRETAHEYGTVTKRPRRIGWFDSVVLRHAKRVSGFTHLSLNCLDVLTGLKTIKVCTAYDLNGETIYHYPASLKELEACKPIYEELPGWDEDITGVKTFEELPTNAQNYLRKLEELVGVKIATFSVGPDREQTNVIDHNIWG.

GTP is bound by residues 12–18 and 40–42; these read GDEGKGK and GHT. The Proton acceptor role is filled by aspartate 13. Residues aspartate 13 and glycine 40 each contribute to the Mg(2+) site. IMP is bound by residues 13 to 16, 38 to 41, threonine 128, arginine 142, glutamine 223, threonine 238, and arginine 302; these read DEGK and NAGH. The active-site Proton donor is the histidine 41. A substrate-binding site is contributed by 298 to 304; the sequence is TVTKRPR. GTP is bound by residues arginine 304, 330–332, and 412–414; these read CLD and SVG.

Belongs to the adenylosuccinate synthetase family. As to quaternary structure, homodimer. It depends on Mg(2+) as a cofactor.

Its subcellular location is the cytoplasm. It catalyses the reaction IMP + L-aspartate + GTP = N(6)-(1,2-dicarboxyethyl)-AMP + GDP + phosphate + 2 H(+). It participates in purine metabolism; AMP biosynthesis via de novo pathway; AMP from IMP: step 1/2. In terms of biological role, plays an important role in the de novo pathway of purine nucleotide biosynthesis. Catalyzes the first committed step in the biosynthesis of AMP from IMP. The protein is Adenylosuccinate synthetase of Lactiplantibacillus plantarum (strain ATCC BAA-793 / NCIMB 8826 / WCFS1) (Lactobacillus plantarum).